A 673-amino-acid chain; its full sequence is Poly(glycerol-phosphate) alpha-glucosyltransferase (673 aa).

Serine 2 bears the Phosphoserine mark.

This sequence belongs to the glycosyltransferase group 1 family. Glycosyltransferase 4 subfamily.

The protein localises to the cytoplasm. It carries out the reaction 4-O-{[(2R)-1-glycerylphospho](n)-(2R)-1-glycerylphospho}-N-acetyl-beta-D-mannosaminyl-(1-&gt;4)-N-acetyl-alpha-D-glucosaminyl undecaprenyl diphosphate + n UDP-alpha-D-glucose = 4-O-{[(2R)-2-alpha-D-glucosyl-1-glycerylphospho](n)-(2R)-1-glycerylphospho}-N-acetyl-beta-D-mannosaminyl-(1-&gt;4)-N-acetyl-alpha-D-glucosaminyl undecaprenyl diphosphate + n UDP + n H(+). It functions in the pathway cell wall biogenesis; poly(glycerol phosphate) teichoic acid biosynthesis. Its function is as follows. Catalyzes the addition of glucose to the C-2 hydroxy group of the glycerol units in teichoic acid. The protein is Poly(glycerol-phosphate) alpha-glucosyltransferase (tagE) of Bacillus subtilis (strain 168).